A 351-amino-acid polypeptide reads, in one-letter code: Nicotinate-nucleotide--dimethylbenzimidazole phosphoribosyltransferase (351 aa).

E317 serves as the catalytic Proton acceptor.

Belongs to the CobT family.

It carries out the reaction 5,6-dimethylbenzimidazole + nicotinate beta-D-ribonucleotide = alpha-ribazole 5'-phosphate + nicotinate + H(+). Its pathway is nucleoside biosynthesis; alpha-ribazole biosynthesis; alpha-ribazole from 5,6-dimethylbenzimidazole: step 1/2. Catalyzes the synthesis of alpha-ribazole-5'-phosphate from nicotinate mononucleotide (NAMN) and 5,6-dimethylbenzimidazole (DMB). This Pseudomonas putida (strain W619) protein is Nicotinate-nucleotide--dimethylbenzimidazole phosphoribosyltransferase.